Reading from the N-terminus, the 65-residue chain is Small ribosomal subunit protein eS17 (65 aa).

It belongs to the eukaryotic ribosomal protein eS17 family.

In Methanocella arvoryzae (strain DSM 22066 / NBRC 105507 / MRE50), this protein is Small ribosomal subunit protein eS17.